We begin with the raw amino-acid sequence, 594 residues long: UvrABC system protein C (594 aa).

In terms of domain architecture, GIY-YIG spans 14 to 91 (DSPGCYLHKD…IQENMPKYNI (78 aa)). The 36-residue stretch at 196-231 (DKIIDDLRSKMLEASHNQEFERAAEYRDLISGIATM) folds into the UVR domain.

It belongs to the UvrC family. In terms of assembly, interacts with UvrB in an incision complex.

The protein localises to the cytoplasm. Functionally, the UvrABC repair system catalyzes the recognition and processing of DNA lesions. UvrC both incises the 5' and 3' sides of the lesion. The N-terminal half is responsible for the 3' incision and the C-terminal half is responsible for the 5' incision. The sequence is that of UvrABC system protein C from Streptococcus equi subsp. equi (strain 4047).